The following is a 590-amino-acid chain: Putative sodium/calcium exchanger 6 (590 aa).

The first 19 residues, 1-19 (MRIHFFAFLIILSLVGCDG), serve as a signal peptide directing secretion. Helical transmembrane passes span 97-117 (IILIITGVIYMLVLFIMVSSA), 139-159 (VAGVTFMAFGNGAPDVFGAIA), 173-193 (LGELFGAGLFVTTMVLAVTIF), 208-228 (IAFYLVALAFLAFCFVYYDHV), 230-250 (IWMPITFLGVYLIYVCTVILS), 368-388 (PITLLQCLICPVFLLFCIQVC), 397-417 (PGLWMYGLILSVLLTAAVLFF), 440-460 (IAWIYLISSEVVNVVTMLGVV), 499-519 (AAAIGGQLFNLLIGFGLPFTI), 535-555 (YRLLMLFLAISLIFTLIAMFA), and 568-588 (LVFIYISFFVFIGLSLDDILV).

The protein belongs to the Ca(2+):cation antiporter (CaCA) (TC 2.A.19) family.

Its subcellular location is the membrane. The protein is Putative sodium/calcium exchanger 6 (ncx-6) of Caenorhabditis elegans.